The sequence spans 250 residues: Proteasome subunit alpha type-7-B (250 aa).

Residue Lys62 forms a Glycyl lysine isopeptide (Lys-Gly) (interchain with G-Cter in ubiquitin) linkage.

This sequence belongs to the peptidase T1A family. In terms of assembly, component of the 20S core complex of the 26S proteasome. The 26S proteasome is composed of a core protease (CP), known as the 20S proteasome, capped at one or both ends by the 19S regulatory particle (RP/PA700). The 20S proteasome core is composed of 28 subunits that are arranged in four stacked rings, resulting in a barrel-shaped structure. The two end rings are each formed by seven alpha subunits, and the two central rings are each formed by seven beta subunits. The catalytic chamber with the active sites is on the inside of the barrel.

Its subcellular location is the cytoplasm. The protein resides in the nucleus. Its function is as follows. The proteasome is a multicatalytic proteinase complex which is characterized by its ability to cleave peptides with Arg, Phe, Tyr, Leu, and Glu adjacent to the leaving group at neutral or slightly basic pH. The proteasome has an ATP-dependent proteolytic activity. This chain is Proteasome subunit alpha type-7-B (PAD2), found in Arabidopsis thaliana (Mouse-ear cress).